The following is a 314-amino-acid chain: Olfactory receptor 1E2 (314 aa).

Over methionine 1–asparagine 25 the chain is Extracellular. N-linked (GlcNAc...) asparagine glycosylation occurs at asparagine 5. A helical transmembrane segment spans residues leucine 26–isoleucine 49. The Cytoplasmic portion of the chain corresponds to arginine 50–threonine 57. The chain crosses the membrane as a helical span at residues proline 58–proline 79. Residues lysine 80 to glutamine 100 lie on the Extracellular side of the membrane. A disulfide bond links cysteine 97 and cysteine 189. A helical transmembrane segment spans residues methionine 101 to tyrosine 120. The Cytoplasmic portion of the chain corresponds to aspartate 121–methionine 139. The chain crosses the membrane as a helical span at residues leucine 140–leucine 158. Residues histidine 159–asparagine 195 lie on the Extracellular side of the membrane. Residues glutamate 196 to alanine 219 form a helical membrane-spanning segment. At arginine 220–lysine 236 the chain is on the cytoplasmic side. The helical transmembrane segment at alanine 237–tyrosine 259 threads the bilayer. Residues leucine 260–threonine 272 lie on the Extracellular side of the membrane. Residue asparagine 265 is glycosylated (N-linked (GlcNAc...) asparagine). A helical transmembrane segment spans residues valine 273–leucine 292. The Cytoplasmic portion of the chain corresponds to arginine 293–leucine 314.

This sequence belongs to the G-protein coupled receptor 1 family.

Its subcellular location is the cell membrane. In terms of biological role, odorant receptor. In Gorilla gorilla gorilla (Western lowland gorilla), this protein is Olfactory receptor 1E2 (OR1E2).